Reading from the N-terminus, the 196-residue chain is Deoxyribose-phosphate aldolase (196 aa).

Asp-91 (proton donor/acceptor) is an active-site residue. The Schiff-base intermediate with acetaldehyde role is filled by Lys-153. Lys-182 serves as the catalytic Proton donor/acceptor.

It belongs to the DeoC/FbaB aldolase family. DeoC type 1 subfamily.

The protein localises to the cytoplasm. It carries out the reaction 2-deoxy-D-ribose 5-phosphate = D-glyceraldehyde 3-phosphate + acetaldehyde. It participates in carbohydrate degradation; 2-deoxy-D-ribose 1-phosphate degradation; D-glyceraldehyde 3-phosphate and acetaldehyde from 2-deoxy-alpha-D-ribose 1-phosphate: step 2/2. Catalyzes a reversible aldol reaction between acetaldehyde and D-glyceraldehyde 3-phosphate to generate 2-deoxy-D-ribose 5-phosphate. The chain is Deoxyribose-phosphate aldolase from Mycoplasma mycoides subsp. mycoides SC (strain CCUG 32753 / NCTC 10114 / PG1).